We begin with the raw amino-acid sequence, 311 residues long: Aspartate carbamoyltransferase catalytic subunit (311 aa).

Residues arginine 55 and threonine 56 each coordinate carbamoyl phosphate. Position 85 (lysine 85) interacts with L-aspartate. Carbamoyl phosphate contacts are provided by arginine 106, histidine 135, and glutamine 138. Residues arginine 168 and arginine 230 each coordinate L-aspartate. Positions 268 and 269 each coordinate carbamoyl phosphate.

It belongs to the aspartate/ornithine carbamoyltransferase superfamily. ATCase family. Heterododecamer (2C3:3R2) of six catalytic PyrB chains organized as two trimers (C3), and six regulatory PyrI chains organized as three dimers (R2).

It catalyses the reaction carbamoyl phosphate + L-aspartate = N-carbamoyl-L-aspartate + phosphate + H(+). It participates in pyrimidine metabolism; UMP biosynthesis via de novo pathway; (S)-dihydroorotate from bicarbonate: step 2/3. Catalyzes the condensation of carbamoyl phosphate and aspartate to form carbamoyl aspartate and inorganic phosphate, the committed step in the de novo pyrimidine nucleotide biosynthesis pathway. The protein is Aspartate carbamoyltransferase catalytic subunit of Yersinia pseudotuberculosis serotype IB (strain PB1/+).